Consider the following 431-residue polypeptide: Phosphoribosylamine--glycine ligase (431 aa).

Residues 109 to 316 (KDFLARHGIP…LVDLLEAAID (208 aa)) form the ATP-grasp domain. 135 to 196 (VREKGTPIVV…EEFLDGEEAS (62 aa)) is an ATP binding site. Mg(2+) contacts are provided by glutamate 286 and asparagine 288.

The protein belongs to the GARS family. Mg(2+) is required as a cofactor. The cofactor is Mn(2+).

The catalysed reaction is 5-phospho-beta-D-ribosylamine + glycine + ATP = N(1)-(5-phospho-beta-D-ribosyl)glycinamide + ADP + phosphate + H(+). Its pathway is purine metabolism; IMP biosynthesis via de novo pathway; N(1)-(5-phospho-D-ribosyl)glycinamide from 5-phospho-alpha-D-ribose 1-diphosphate: step 2/2. This chain is Phosphoribosylamine--glycine ligase, found in Xanthomonas axonopodis pv. citri (strain 306).